The sequence spans 1052 residues: Membrane-bound transcription factor site-1 protease (1052 aa).

A signal peptide spans methionine 1 to glycine 17. The propeptide occupies lysine 18–leucine 186. An N-linked (GlcNAc...) asparagine glycan is attached at asparagine 148. Position 168 is a phosphoserine (serine 168). At arginine 187–glycine 999 the chain is on the lumenal side. Residues proline 190–tyrosine 472 form the Peptidase S8 domain. Catalysis depends on aspartate 218, which acts as the Charge relay system. Asparagine 236 carries N-linked (GlcNAc...) asparagine glycosylation. Histidine 249 serves as the catalytic Charge relay system. Asparagine 305 is a glycosylation site (N-linked (GlcNAc...) asparagine). Residue serine 414 is the Charge relay system of the active site. 2 N-linked (GlcNAc...) asparagine glycosylation sites follow: asparagine 515 and asparagine 728. The span at proline 877–arginine 887 shows a compositional bias: polar residues. Positions proline 877–methionine 900 are disordered. N-linked (GlcNAc...) asparagine glycosylation is present at asparagine 939. Residues glutamine 1000 to serine 1022 form a helical membrane-spanning segment. Topologically, residues lysine 1023–valine 1052 are cytoplasmic. Residues serine 1026–arginine 1037 are compositionally biased toward basic residues. The interval serine 1026 to valine 1052 is disordered.

The protein belongs to the peptidase S8 family. As to quaternary structure, interacts with LYSET; this interaction bridges GNPTAB to MBTPS1. Ca(2+) is required as a cofactor. Post-translationally, the 148 kDa zymogen is processed progressively into two membrane-bound 120 and 106 kDa forms in the endoplasmic reticulum, and late into a secreted 98 kDa form. The propeptide is autocatalytically removed through an intramolecular cleavage after Leu-186. Further cleavage generates 14, 10, and 8 kDa intermediates.

The protein localises to the endoplasmic reticulum membrane. The protein resides in the golgi apparatus membrane. It carries out the reaction Processes precursors containing basic and hydrophobic/aliphatic residues at P4 and P2, respectively, with a relatively relaxed acceptance of amino acids at P1 and P3.. Its activity is regulated as follows. Inhibited by divalent copper and zinc ions, but not by nickel or cobalt. Inhibited by its prosegment, but not smaller fragments. Inhibited by 4-(2-aminoethyl)benzenesulfonyl fluoride (AEBSF), a serine protease inhibitor. In terms of biological role, serine protease that cleaves after hydrophobic or small residues, provided that Arg or Lys is in position P4: known substrates include SREBF1/SREBP1, SREBF2/SREBP2, BDNF, GNPTAB, ATF6, ATF6B and FAM20C. Cleaves substrates after Arg-Ser-Val-Leu (SREBP2), Arg-His-Leu-Leu (ATF6), Arg-Gly-Leu-Thr (BDNF) and its own propeptide after Arg-Arg-Leu-Leu. Catalyzes the first step regulated intramembrane proteolysis activation of the sterol regulatory element-binding proteins (SREBPs) SREBF1/SREBP1 and SREBF2/SREBP2. Also mediates the first step of the regulated intramembrane proteolytic activation of the cyclic AMP-dependent transcription factor ATF-6 (ATF6 and ATF6B). Mediates the protein cleavage of GNPTAB into subunit alpha and beta, thereby participating in biogenesis of lysosomes. Cleaves the propeptide from FAM20C which is required for FAM20C secretion from the Golgi apparatus membrane and for enhancement of FAM20C kinase activity, promoting osteoblast differentiation and biomineralization. Involved in the regulation of M6P-dependent Golgi-to-lysosome trafficking of lysosomal enzymes. It is required for the activation of CREB3L2/BBF2H7, a transcriptional activator of MIA3/TANGO and other genes controlling mega vesicle formation. Therefore, it plays a key role in the regulation of mega vesicle-mediated collagen trafficking. In astrocytes and osteoblasts, upon DNA damage and ER stress, mediates the first step of the regulated intramembrane proteolytic activation of the transcription factor CREB3L1, leading to the inhibition of cell-cycle progression. The polypeptide is Membrane-bound transcription factor site-1 protease (Mbtps1) (Mus musculus (Mouse)).